The chain runs to 104 residues: L-rhamnose mutarotase (104 aa).

Position 18 (Tyr-18) interacts with substrate. His-22 functions as the Proton donor in the catalytic mechanism. Substrate is bound by residues Tyr-41 and 76–77 (WW).

Belongs to the rhamnose mutarotase family. In terms of assembly, homodimer.

It localises to the cytoplasm. It catalyses the reaction alpha-L-rhamnose = beta-L-rhamnose. Its pathway is carbohydrate metabolism; L-rhamnose metabolism. Its function is as follows. Involved in the anomeric conversion of L-rhamnose. The protein is L-rhamnose mutarotase of Burkholderia orbicola (strain MC0-3).